A 533-amino-acid polypeptide reads, in one-letter code: GPI mannosyltransferase 4 (533 aa).

A run of 6 helical transmembrane segments spans residues 8–28 (AIIYTFLLILRFWFSQGSSYI), 61–81 (IRSVVPLNVMLLPIFLLCRCI), 91–111 (ILLFTRLYMCLISLLIDLSIW), 144–164 (IETIFFFLTILFLSKLNSVPL), 175–195 (LLAIVSVLGFFTRITFLAFVI), and 216–236 (IFLHLCIFVSVSFATVLACIL). Asn261 carries N-linked (GlcNAc...) asparagine glycosylation. Helical transmembrane passes span 274–294 (FFTNMPLLCGPLIFVPKLWDV), 297–317 (PATWLWLLPVFILSLFPHQEP), 319–335 (FLLPAASIFIVNSGCLV), and 338–358 (YWIKFLFVMYAVVLAVFFGIM). N-linked (GlcNAc...) asparagine glycans are attached at residues Asn378, Asn419, Asn425, Asn452, Asn477, and Asn518.

Belongs to the glycosyltransferase 22 family. PIGZ subfamily.

The protein resides in the endoplasmic reticulum membrane. The protein operates within glycolipid biosynthesis; glycosylphosphatidylinositol-anchor biosynthesis. Its function is as follows. Alpha-1,2-mannosyltransferase involved in glycosylphosphatidylinositol-anchor biosynthesis. Transfers a fourth mannose to trimannosyl-GPIs during GPI precursor assembly. The presence of a fourth mannose in GPI is essential in fungi. This is GPI mannosyltransferase 4 (smp3) from Schizosaccharomyces pombe (strain 972 / ATCC 24843) (Fission yeast).